The following is a 206-amino-acid chain: uncharacterized protein (206 aa).

The N-terminal stretch at 1–22 (MPKLRLIGLTLLALSATAVSHA) is a signal peptide. The SH3b domain maps to 23 to 89 (EETRYVSDEL…IPLKQLSTEP (67 aa)). Residues 169 to 191 (IIMQWFMYGGGVLGLGLLLGLVL) form a helical membrane-spanning segment.

The protein to H.influenzae HI_1605.

The protein resides in the membrane. This is an uncharacterized protein from Escherichia coli O157:H7.